A 710-amino-acid polypeptide reads, in one-letter code: ARM REPEAT PROTEIN INTERACTING WITH ABF2 (710 aa).

The tract at residues 1 to 35 (MDQQPERREGRSFPERKGQKRKLEEGAAAVEDREI) is disordered. 9 ARM repeats span residues 85-127 (EDLV…EKGS), 138-185 (PEYQ…NLAH), 188-227 (SSIKTRVRVEGGIPPLVELLEFSDSKVQRAAAGALRTLAF), 230-269 (DDNKNQIVECNALPTLILMLGSEDAAIHYEAVGVIGNLVH), 272-311 (PHIKKEVLTAGALQPVIGLLSSCCPESQREAALLLGQFAS), 314-353 (SDCKVHIVQRGAVRPLIEMLQSPDVQLKEMSAFALGRLAQ), 355-394 (AHNQAGIAHSGGLGPLLKLLDSRNGSLQHNAAFALYGLAD), 429-468 (LKRLEEKIHGRVLRHLLYLMRISEKSIQRRVALALAHLCS), and 470-509 (EDQRTIFIDDNGLELLLGLLGSLNTKQQLDGAAALYKLAN). Residues 541–608 (SDVTFLVEGR…IYTGSVDITN (68 aa)) form the BTB domain.

Interacts with ABF2. Interacts with DUF7/AIP1. As to expression, detected in embryos and most of the vegetative and reproductive organs.

It is found in the nucleus. It participates in protein modification; protein ubiquitination. Functionally, may act as a substrate-specific adapter of an E3 ubiquitin-protein ligase complex (CUL3-RBX1-BTB) which mediates the ubiquitination and subsequent proteasomal degradation of target proteins. Acts as a positive regulator of ABA response via the modulation of the transcriptional activity of ABF2, a transcription factor which controls ABA-dependent gene expression via the G-box-type ABA-responsive elements. Negative regulator of seed germination and young seedling growth. The polypeptide is ARM REPEAT PROTEIN INTERACTING WITH ABF2 (ARIA) (Arabidopsis thaliana (Mouse-ear cress)).